A 244-amino-acid polypeptide reads, in one-letter code: MMRTQCLLGLRTFVAFAAKLWSFFIYLLRRQIRTVIQYQTVRYDILPLSPLSRNRLAQVKRKILVLDLDETLIHSHHDGVLRPTVRPGTPPDFILKVVIDKHPVRFFVHKRPHVDFFLEVVSQWYELVVFTASMEIYGSAVADKLDNSRSILKRRYYRQHCTLELGSYIKDLSVVHSDLSSIVILDNSPGAYRSHPDNAIPIKSWFSDPSDTALLNLLPMLDALRFTADVRSVLSRNLHQHRLW.

Residues 7-29 (LLGLRTFVAFAAKLWSFFIYLLR) form a helical membrane-spanning segment. Positions 57–224 (AQVKRKILVL…LNLLPMLDAL (168 aa)) constitute an FCP1 homology domain.

This sequence belongs to the dullard family. As to quaternary structure, interacts with CNEP1R1; the complex dephosphorylates LPIN1 and LPIN2. Muscle specific with lower expression in other metabolic tissues.

It is found in the endoplasmic reticulum membrane. Its subcellular location is the nucleus membrane. The catalysed reaction is O-phospho-L-seryl-[protein] + H2O = L-seryl-[protein] + phosphate. The enzyme catalyses O-phospho-L-threonyl-[protein] + H2O = L-threonyl-[protein] + phosphate. In terms of biological role, serine/threonine protein phosphatase forming with CNEP1R1 an active phosphatase complex that dephosphorylates and may activate LPIN1 and LPIN2. LPIN1 and LPIN2 are phosphatidate phosphatases that catalyze the conversion of phosphatidic acid to diacylglycerol and control the metabolism of fatty acids at different levels. May indirectly modulate the lipid composition of nuclear and/or endoplasmic reticulum membranes and be required for proper nuclear membrane morphology and/or dynamics. May also indirectly regulate the production of lipid droplets and triacylglycerol. May antagonize BMP signaling. This chain is CTD nuclear envelope phosphatase 1 (Ctdnep1), found in Mus musculus (Mouse).